The chain runs to 89 residues: Cell division protein ZapA (89 aa).

Belongs to the ZapA family. Type 2 subfamily. Homodimer. Interacts with FtsZ.

It localises to the cytoplasm. Activator of cell division through the inhibition of FtsZ GTPase activity, therefore promoting FtsZ assembly into bundles of protofilaments necessary for the formation of the division Z ring. It is recruited early at mid-cell but it is not essential for cell division. The sequence is that of Cell division protein ZapA from Bacillus thuringiensis (strain Al Hakam).